The primary structure comprises 280 residues: Probable 6-phosphogluconolactonase 2 (280 aa).

It belongs to the glucosamine/galactosamine-6-phosphate isomerase family. 6-phosphogluconolactonase subfamily.

The catalysed reaction is 6-phospho-D-glucono-1,5-lactone + H2O = 6-phospho-D-gluconate + H(+). It functions in the pathway carbohydrate degradation; pentose phosphate pathway; D-ribulose 5-phosphate from D-glucose 6-phosphate (oxidative stage): step 2/3. In terms of biological role, hydrolysis of 6-phosphogluconolactone to 6-phosphogluconate. This chain is Probable 6-phosphogluconolactonase 2, found in Oryza sativa subsp. indica (Rice).